A 325-amino-acid chain; its full sequence is 5-dehydro-2-deoxygluconokinase (325 aa).

The protein belongs to the carbohydrate kinase PfkB family.

The enzyme catalyses 5-dehydro-2-deoxy-D-gluconate + ATP = 6-phospho-5-dehydro-2-deoxy-D-gluconate + ADP + H(+). It participates in polyol metabolism; myo-inositol degradation into acetyl-CoA; acetyl-CoA from myo-inositol: step 5/7. Catalyzes the phosphorylation of 5-dehydro-2-deoxy-D-gluconate (2-deoxy-5-keto-D-gluconate or DKG) to 6-phospho-5-dehydro-2-deoxy-D-gluconate (DKGP). The protein is 5-dehydro-2-deoxygluconokinase of Listeria monocytogenes serovar 1/2a (strain ATCC BAA-679 / EGD-e).